Consider the following 558-residue polypeptide: Scarecrow-like protein 6 (558 aa).

The segment at Phe19–Cys90 is disordered. Over residues Ser54–Asn75 the composition is skewed to low complexity. A GRAS domain is found at Lys196 to Arg554. The interval Val203–Leu257 is leucine repeat I (LRI). A VHIID region spans residues Tyr276–Ile340. Positions Leu307–Asp311 match the VHIID motif. The tract at residues Phe356–Pro388 is leucine repeat II (LRII). A PFYRE region spans residues Val396–Lys479. The SAW stretch occupies residues Leu482 to Arg554.

Belongs to the GRAS family. Interacts with Meloidogyne incognita 16D10. Expressed in seedlings, roots, leaves, flowers and siliques.

The protein localises to the nucleus. Functionally, probable transcription factor involved in plant development. This Arabidopsis thaliana (Mouse-ear cress) protein is Scarecrow-like protein 6 (SCL6).